The chain runs to 218 residues: GTP cyclohydrolase 1 (218 aa).

Residues Cys-109, His-112, and Cys-180 each contribute to the Zn(2+) site.

This sequence belongs to the GTP cyclohydrolase I family. Toroid-shaped homodecamer, composed of two pentamers of five dimers.

The enzyme catalyses GTP + H2O = 7,8-dihydroneopterin 3'-triphosphate + formate + H(+). The protein operates within cofactor biosynthesis; 7,8-dihydroneopterin triphosphate biosynthesis; 7,8-dihydroneopterin triphosphate from GTP: step 1/1. This chain is GTP cyclohydrolase 1 (folE), found in Pasteurella multocida (strain Pm70).